The chain runs to 137 residues: ATP synthase epsilon chain (137 aa).

It belongs to the ATPase epsilon chain family. As to quaternary structure, F-type ATPases have 2 components, CF(1) - the catalytic core - and CF(0) - the membrane proton channel. CF(1) has five subunits: alpha(3), beta(3), gamma(1), delta(1), epsilon(1). CF(0) has three main subunits: a, b and c.

It localises to the cell inner membrane. In terms of biological role, produces ATP from ADP in the presence of a proton gradient across the membrane. This Yersinia pestis bv. Antiqua (strain Antiqua) protein is ATP synthase epsilon chain.